Reading from the N-terminus, the 455-residue chain is Bifunctional protein GlmU (455 aa).

A pyrophosphorylase region spans residues Met-1–Arg-230. Residues Leu-9 to Gly-12, Lys-23, Gln-73, Gly-78 to Thr-79, Ser-101 to Asp-103, Gly-140, Glu-155, Asn-170, and Asn-228 each bind UDP-N-acetyl-alpha-D-glucosamine. Position 103 (Asp-103) interacts with Mg(2+). Asn-228 lines the Mg(2+) pocket. The interval Ser-231–Asp-251 is linker. The N-acetyltransferase stretch occupies residues Gly-252 to Trp-455. Positions 333 and 351 each coordinate UDP-N-acetyl-alpha-D-glucosamine. His-363 acts as the Proton acceptor in catalysis. Tyr-366 and Asn-377 together coordinate UDP-N-acetyl-alpha-D-glucosamine. Acetyl-CoA-binding positions include Asn-386–Tyr-387, Ser-405, Ala-423, and Arg-440.

This sequence in the N-terminal section; belongs to the N-acetylglucosamine-1-phosphate uridyltransferase family. The protein in the C-terminal section; belongs to the transferase hexapeptide repeat family. As to quaternary structure, homotrimer. Mg(2+) is required as a cofactor.

It localises to the cytoplasm. The enzyme catalyses alpha-D-glucosamine 1-phosphate + acetyl-CoA = N-acetyl-alpha-D-glucosamine 1-phosphate + CoA + H(+). It catalyses the reaction N-acetyl-alpha-D-glucosamine 1-phosphate + UTP + H(+) = UDP-N-acetyl-alpha-D-glucosamine + diphosphate. It functions in the pathway nucleotide-sugar biosynthesis; UDP-N-acetyl-alpha-D-glucosamine biosynthesis; N-acetyl-alpha-D-glucosamine 1-phosphate from alpha-D-glucosamine 6-phosphate (route II): step 2/2. Its pathway is nucleotide-sugar biosynthesis; UDP-N-acetyl-alpha-D-glucosamine biosynthesis; UDP-N-acetyl-alpha-D-glucosamine from N-acetyl-alpha-D-glucosamine 1-phosphate: step 1/1. The protein operates within bacterial outer membrane biogenesis; LPS lipid A biosynthesis. Functionally, catalyzes the last two sequential reactions in the de novo biosynthetic pathway for UDP-N-acetylglucosamine (UDP-GlcNAc). The C-terminal domain catalyzes the transfer of acetyl group from acetyl coenzyme A to glucosamine-1-phosphate (GlcN-1-P) to produce N-acetylglucosamine-1-phosphate (GlcNAc-1-P), which is converted into UDP-GlcNAc by the transfer of uridine 5-monophosphate (from uridine 5-triphosphate), a reaction catalyzed by the N-terminal domain. The sequence is that of Bifunctional protein GlmU from Limosilactobacillus fermentum (strain NBRC 3956 / LMG 18251) (Lactobacillus fermentum).